The following is a 192-amino-acid chain: Endoribonuclease YbeY (192 aa).

Histidine 109, histidine 113, and histidine 119 together coordinate Zn(2+). Residues 142-192 (VGAALREGGPARAAETETSWTRSPTSTSTRSPSGSTARGTRARSSRAGSGR) form a disordered region. Positions 159 to 180 (TSWTRSPTSTSTRSPSGSTARG) are enriched in low complexity.

It belongs to the endoribonuclease YbeY family. It depends on Zn(2+) as a cofactor.

It is found in the cytoplasm. In terms of biological role, single strand-specific metallo-endoribonuclease involved in late-stage 70S ribosome quality control and in maturation of the 3' terminus of the 16S rRNA. This chain is Endoribonuclease YbeY, found in Anaeromyxobacter sp. (strain Fw109-5).